Reading from the N-terminus, the 240-residue chain is Protein FATTY ACID EXPORT 2, chloroplastic (240 aa).

The transit peptide at 1–84 directs the protein to the chloroplast; it reads MADLILSSSS…TANCVDSGVK (84 aa). Gly residues predominate over residues 97-113; the sequence is GGGIGGDKFGGGGGGGD. Residues 97–134 form a disordered region; sequence GGGIGGDKFGGGGGGGDGNDDGGEDDKEESDGKKSTPL. Acidic residues predominate over residues 114–125; the sequence is GNDDGGEDDKEE. The next 3 helical transmembrane spans lie at 164 to 184, 186 to 206, and 214 to 234; these read SLLA…QLPT, PVLA…VMGT, and IFPA…YIHG.

It belongs to the TMEM14 family.

It is found in the plastid. The protein resides in the chloroplast membrane. In terms of biological role, may be involved in free fatty acids export from the plastids. The sequence is that of Protein FATTY ACID EXPORT 2, chloroplastic from Arabidopsis thaliana (Mouse-ear cress).